A 556-amino-acid polypeptide reads, in one-letter code: 2-isopropylmalate synthase (556 aa).

In terms of domain architecture, Pyruvate carboxyltransferase spans 33 to 307 (PIWCSSDLRD…DPELDFSDID (275 aa)). 4 residues coordinate Mg(2+): aspartate 42, histidine 246, histidine 248, and asparagine 282. A regulatory domain region spans residues 439-556 (ANTPYALISH…SLSQTQAKAA (118 aa)).

The protein belongs to the alpha-IPM synthase/homocitrate synthase family. LeuA type 2 subfamily. Homodimer. Mg(2+) is required as a cofactor.

The protein resides in the cytoplasm. It catalyses the reaction 3-methyl-2-oxobutanoate + acetyl-CoA + H2O = (2S)-2-isopropylmalate + CoA + H(+). It functions in the pathway amino-acid biosynthesis; L-leucine biosynthesis; L-leucine from 3-methyl-2-oxobutanoate: step 1/4. Functionally, catalyzes the condensation of the acetyl group of acetyl-CoA with 3-methyl-2-oxobutanoate (2-ketoisovalerate) to form 3-carboxy-3-hydroxy-4-methylpentanoate (2-isopropylmalate). This is 2-isopropylmalate synthase from Pseudomonas savastanoi pv. phaseolicola (strain 1448A / Race 6) (Pseudomonas syringae pv. phaseolicola (strain 1448A / Race 6)).